The following is a 483-amino-acid chain: UDP-N-acetylmuramoylalanine--D-glutamate ligase (483 aa).

119–125 (GTNGKTT) contributes to the ATP binding site.

The protein belongs to the MurCDEF family.

The protein localises to the cytoplasm. The enzyme catalyses UDP-N-acetyl-alpha-D-muramoyl-L-alanine + D-glutamate + ATP = UDP-N-acetyl-alpha-D-muramoyl-L-alanyl-D-glutamate + ADP + phosphate + H(+). The protein operates within cell wall biogenesis; peptidoglycan biosynthesis. Functionally, cell wall formation. Catalyzes the addition of glutamate to the nucleotide precursor UDP-N-acetylmuramoyl-L-alanine (UMA). This chain is UDP-N-acetylmuramoylalanine--D-glutamate ligase, found in Mycolicibacterium vanbaalenii (strain DSM 7251 / JCM 13017 / BCRC 16820 / KCTC 9966 / NRRL B-24157 / PYR-1) (Mycobacterium vanbaalenii).